The following is a 493-amino-acid chain: Glycerol kinase (493 aa).

Thr-13 contributes to the ADP binding site. ATP-binding residues include Thr-13, Thr-14, and Ser-15. Position 13 (Thr-13) interacts with sn-glycerol 3-phosphate. Arg-17 contacts ADP. Positions 83, 84, 135, and 244 each coordinate sn-glycerol 3-phosphate. Residues Arg-83, Glu-84, Tyr-135, Asp-244, and Gln-245 each coordinate glycerol. Thr-266 and Gly-309 together coordinate ADP. ATP is bound by residues Thr-266, Gly-309, Gln-313, and Gly-410. ADP is bound by residues Gly-410 and Asn-414.

This sequence belongs to the FGGY kinase family.

The catalysed reaction is glycerol + ATP = sn-glycerol 3-phosphate + ADP + H(+). The protein operates within polyol metabolism; glycerol degradation via glycerol kinase pathway; sn-glycerol 3-phosphate from glycerol: step 1/1. Inhibited by fructose 1,6-bisphosphate (FBP). Its function is as follows. Key enzyme in the regulation of glycerol uptake and metabolism. Catalyzes the phosphorylation of glycerol to yield sn-glycerol 3-phosphate. The chain is Glycerol kinase from Shewanella halifaxensis (strain HAW-EB4).